A 177-amino-acid polypeptide reads, in one-letter code: Large ribosomal subunit protein uL6 (177 aa).

This sequence belongs to the universal ribosomal protein uL6 family. As to quaternary structure, part of the 50S ribosomal subunit.

Functionally, this protein binds to the 23S rRNA, and is important in its secondary structure. It is located near the subunit interface in the base of the L7/L12 stalk, and near the tRNA binding site of the peptidyltransferase center. This Proteus mirabilis (strain HI4320) protein is Large ribosomal subunit protein uL6.